The chain runs to 233 residues: Ras-related protein Rab-20 (233 aa).

Residues G17, K18, T19, D32, and T36 each contribute to the GTP site. T19 is a binding site for Mg(2+). 2 short sequence motifs (switch) span residues R28–F41 and D55–G72. Mg(2+)-binding residues include T36 and D55. GTP is bound by residues G58, N113, K114, and D116. The segment covering S119 to G130 has biased composition (basic and acidic residues). Residues S119–S138 form a disordered region. GTP-binding residues include A183 and K184. 2 S-geranylgeranyl cysteine lipidation sites follow: C231 and C232.

Belongs to the small GTPase superfamily. Rab family. Requires Mg(2+) as cofactor. Present in a variety of tissues, but not in brain.

It is found in the cytoplasmic vesicle. Its subcellular location is the phagosome. The protein localises to the phagosome membrane. The protein resides in the golgi apparatus. It carries out the reaction GTP + H2O = GDP + phosphate + H(+). Regulated by guanine nucleotide exchange factors (GEFs) which promote the exchange of bound GDP for free GTP. Regulated by GTPase activating proteins (GAPs) which increase the GTP hydrolysis activity. Inhibited by GDP dissociation inhibitors (GDIs). Functionally, plays a role in apical endocytosis/recycling. Plays a role in the maturation and acidification of phagosomes that engulf pathogens, such as S.aureus and Mycobacterium. Plays a role in the fusion of phagosomes with lysosomes. The protein is Ras-related protein Rab-20 of Mus musculus (Mouse).